Reading from the N-terminus, the 115-residue chain is uncharacterized protein (115 aa).

Positions 1–29 are cleaved as a signal peptide; that stretch reads MKKAMAILAVLAAAAVICGLLFFHNDVTD.

This is an uncharacterized protein from Bacillus subtilis (strain 168).